A 150-amino-acid chain; its full sequence is Arginine repressor (150 aa).

This sequence belongs to the ArgR family.

The protein localises to the cytoplasm. It participates in amino-acid biosynthesis; L-arginine biosynthesis [regulation]. Its function is as follows. Regulates arginine biosynthesis genes. This chain is Arginine repressor, found in Thermoanaerobacter sp. (strain X514).